The chain runs to 552 residues: MENVKQTIRAPRGTELQTKGWIQEAALRMLMNNLDPEVAEKPEELVVYGGIGRAARNWESYQAIVDSLKTLESDETLLVQSGKPVAIFKSHEDAPRVLLANSNLVPKWANWEHFRELEQKGLMMYGQMTAGSWIYIGTQGILQGTYETFGEAARQHFGGSLKGTLTLTAGLGGMGGAQPLAVTMNGGVVIAIDVDKRSIERRIEKRYCDMYTESLEEALAVATEYKEKKEPISIGLLGNAAEILPELVSRGITPDLVTDQTSAHDPLNGYVPAGYSLEEATKLRAEDPDRYVQLSKESMKKHVEAMLAMQEKGAIAFDYGNNIRQVAFDEGLEHAFDFPGFVPAFIRPLFCEGKGPFRWVALSGDPEDIYKTDEVILREFAHNEHLCNWIRMARQQVEFQGLPSRICWLGYGERAKFGRIINEMVASGELSAPIVIGRDHLDCGSVASPNRETEGMKDGSDAVADWPILNALINSVNGASWVSVHHGGGVGMGYSLHAGMVIVADGTEAAAKRIERVLTSDPGMGVVRHVDAGYDLAVQTAKEKGVNIPMMK.

NAD(+) is bound by residues 49-50, glutamine 127, 173-175, aspartate 193, 239-240, 260-264, 270-271, and tyrosine 319; these read GG, GMG, NA, QTSAH, and YV. The active site involves cysteine 407. An NAD(+)-binding site is contributed by glycine 489.

This sequence belongs to the urocanase family. NAD(+) serves as cofactor.

Its subcellular location is the cytoplasm. It catalyses the reaction 4-imidazolone-5-propanoate = trans-urocanate + H2O. The protein operates within amino-acid degradation; L-histidine degradation into L-glutamate; N-formimidoyl-L-glutamate from L-histidine: step 2/3. In terms of biological role, catalyzes the conversion of urocanate to 4-imidazolone-5-propionate. The chain is Urocanate hydratase from Bacillus cytotoxicus (strain DSM 22905 / CIP 110041 / 391-98 / NVH 391-98).